Consider the following 259-residue polypeptide: UPF0246 protein MADE_1015435 (259 aa).

The protein belongs to the UPF0246 family.

This is UPF0246 protein MADE_1015435 from Alteromonas mediterranea (strain DSM 17117 / CIP 110805 / LMG 28347 / Deep ecotype).